Here is a 59-residue protein sequence, read N- to C-terminus: Early growth response protein 1 (59 aa).

3 consecutive C2H2-type zinc fingers follow at residues 1–18, 24–46, and 52–59; these read CDRRFSRSDELTRHIRIH, FQCRICMRNFSRSDHLTTHIRTH, and FACDICGR.

Belongs to the EGR C2H2-type zinc-finger protein family.

The protein resides in the nucleus. It is found in the cytoplasm. Transcriptional regulator. Recognizes and binds to the DNA sequence 5'-GCG(T/G)GGGCG-3'(EGR-site) in the promoter region of target genes. Binds double-stranded target DNA, irrespective of the cytosine methylation status. Regulates the transcription of numerous target genes, and thereby plays an important role in regulating the response to growth factors, DNA damage, and ischemia. Plays a role in the regulation of cell survival, proliferation and cell death. Mediates responses to ischemia and hypoxia; regulates the expression of proteins that are involved in inflammatory processes. Plays a role in regulating the expression of circadian clock genes. The chain is Early growth response protein 1 (EGR1) from Serinus canaria (Island canary).